The sequence spans 85 residues: Electron transfer flavoprotein regulatory factor 1 homolog (85 aa).

Belongs to the complex I LYR family. Highly expressed in the larval fat body.

It is found in the mitochondrion. Acts as a regulator of the electron transfer flavoprotein by promoting the removal of flavin from the ETF holoenzyme. May act with the ETF complex to coordinate lipid homeostasis in the fat body in response to stage-specific demands. This Drosophila melanogaster (Fruit fly) protein is Electron transfer flavoprotein regulatory factor 1 homolog.